A 192-amino-acid chain; its full sequence is Interleukin-18 (192 aa).

A propeptide spanning residues 1–35 is cleaved from the precursor; that stretch reads MAAMSEDSCVNFKEMMFIDNTLYFIPEENGDLESD.

The protein belongs to the IL-1 family. As to quaternary structure, forms a ternary complex with ligand-binding receptor subunit IL18R1 and signaling receptor subunit IL18RAP at the plasma membrane. Mature IL18 first binds to IL18R1 forming a low affinity binary complex, which then interacts with IL18RAP to form a high affinity ternary complex that signals inside the cell. Interacts with cargo receptor TMED10; the interaction mediates the translocation from the cytoplasm into the ERGIC (endoplasmic reticulum-Golgi intermediate compartment) and thereby secretion. The pro-IL-18 precursor is processed by CASP1 to yield its mature, active form. The pro-IL-18 precursor is however not processed by Casp4/Casp11 in rodents. The pro-IL-18 precursor features autoinhibitory interactions between the propeptide and the post-cleavage-site region, preventing recognition by the IL18R1 receptor. Processing by CASP1 induces conformational changes to generate critical receptor-binding sites. The mature form is then secreted and released in the extracellular milieu by passing through the gasdermin-D (GSDMD) pore. In contrast, cleavage by CASP3 inactivates IL18.

The protein localises to the cytoplasm. It is found in the secreted. Its function is as follows. Pro-inflammatory cytokine primarily involved in epithelial barrier repair, polarized T-helper 1 (Th1) cell and natural killer (NK) cell immune responses. Upon binding to IL18R1 and IL18RAP, forms a signaling ternary complex which activates NF-kappa-B, triggering synthesis of inflammatory mediators. Synergizes with IL12/interleukin-12 to induce IFNG synthesis from T-helper 1 (Th1) cells and natural killer (NK) cells. Involved in transduction of inflammation downstream of pyroptosis: its mature form is specifically released in the extracellular milieu by passing through the gasdermin-D (GSDMD) pore. This is Interleukin-18 from Mus musculus (Mouse).